The following is a 484-amino-acid chain: Probable glycine dehydrogenase (decarboxylating) subunit 2 (484 aa).

Lys-264 carries the N6-(pyridoxal phosphate)lysine modification.

Belongs to the GcvP family. C-terminal subunit subfamily. As to quaternary structure, the glycine cleavage system is composed of four proteins: P, T, L and H. In this organism, the P 'protein' is a heterodimer of two subunits. Pyridoxal 5'-phosphate serves as cofactor.

The catalysed reaction is N(6)-[(R)-lipoyl]-L-lysyl-[glycine-cleavage complex H protein] + glycine + H(+) = N(6)-[(R)-S(8)-aminomethyldihydrolipoyl]-L-lysyl-[glycine-cleavage complex H protein] + CO2. Functionally, the glycine cleavage system catalyzes the degradation of glycine. The P protein binds the alpha-amino group of glycine through its pyridoxal phosphate cofactor; CO(2) is released and the remaining methylamine moiety is then transferred to the lipoamide cofactor of the H protein. This Legionella pneumophila (strain Corby) protein is Probable glycine dehydrogenase (decarboxylating) subunit 2.